A 194-amino-acid polypeptide reads, in one-letter code: Xanthine phosphoribosyltransferase (194 aa).

Leucine 20 and asparagine 27 together coordinate xanthine. 128 to 132 (ANGQA) is a 5-phospho-alpha-D-ribose 1-diphosphate binding site. Lysine 156 is a binding site for xanthine.

This sequence belongs to the purine/pyrimidine phosphoribosyltransferase family. Xpt subfamily. Homodimer.

It localises to the cytoplasm. The enzyme catalyses XMP + diphosphate = xanthine + 5-phospho-alpha-D-ribose 1-diphosphate. Its pathway is purine metabolism; XMP biosynthesis via salvage pathway; XMP from xanthine: step 1/1. Its function is as follows. Converts the preformed base xanthine, a product of nucleic acid breakdown, to xanthosine 5'-monophosphate (XMP), so it can be reused for RNA or DNA synthesis. The polypeptide is Xanthine phosphoribosyltransferase (Geobacillus thermodenitrificans (strain NG80-2)).